We begin with the raw amino-acid sequence, 415 residues long: Gamma-glutamyl phosphate reductase (415 aa).

This sequence belongs to the gamma-glutamyl phosphate reductase family.

Its subcellular location is the cytoplasm. It carries out the reaction L-glutamate 5-semialdehyde + phosphate + NADP(+) = L-glutamyl 5-phosphate + NADPH + H(+). The protein operates within amino-acid biosynthesis; L-proline biosynthesis; L-glutamate 5-semialdehyde from L-glutamate: step 2/2. Its function is as follows. Catalyzes the NADPH-dependent reduction of L-glutamate 5-phosphate into L-glutamate 5-semialdehyde and phosphate. The product spontaneously undergoes cyclization to form 1-pyrroline-5-carboxylate. This Bacillus cereus (strain AH187) protein is Gamma-glutamyl phosphate reductase.